A 238-amino-acid polypeptide reads, in one-letter code: Laccase-S (238 aa).

2 Plastocyanin-like domains span residues 4 to 87 (NVIA…YDPA) and 100 to 238 (HTII…IARY). A glycan (N-linked (GlcNAc...) asparagine) is linked at asparagine 8. Positions 21, 23, 66, and 68 each coordinate Cu cation. The cysteines at positions 74 and 162 are disulfide-linked. Asparagine 165 carries an N-linked (GlcNAc...) asparagine glycan.

The protein belongs to the multicopper oxidase family. As to quaternary structure, monomer. It depends on Cu cation as a cofactor.

The protein resides in the secreted. It carries out the reaction 4 hydroquinone + O2 = 4 benzosemiquinone + 2 H2O. Its activity is regulated as follows. Activity is strongly promoted by toluene. Activity is promoted by magnesium, potassium, cadmium, zinc, nickel, sodium, lead and manganese ions. Completely inhibited by IAA (cysteine protease inhibitor), PMSF (serine protease inhibitor), DEP (histidine protease inhibitor) and NAI (tyrosine protease inhibitor). Inhibited by ethanol, acetone, SDS, and EDTA. Activity is strongly inhibited by mercury ions. Also inhibited by lithium, aluminum, calcium, barium and iron ions. In terms of biological role, lignin degradation and detoxification of lignin-derived products. Has activity towards 2,2'-azino-bis(3-ethylbenzothiazoline-6-sulfonic acid) (ABTS). This Trametes hirsuta (White-rot fungus) protein is Laccase-S.